The chain runs to 179 residues: Large ribosomal subunit protein uL6 (179 aa).

Belongs to the universal ribosomal protein uL6 family. In terms of assembly, part of the 50S ribosomal subunit.

Its function is as follows. This protein binds to the 23S rRNA, and is important in its secondary structure. It is located near the subunit interface in the base of the L7/L12 stalk, and near the tRNA binding site of the peptidyltransferase center. This chain is Large ribosomal subunit protein uL6, found in Chlorobium chlorochromatii (strain CaD3).